Here is a 197-residue protein sequence, read N- to C-terminus: 7-methyl-GTP pyrophosphatase (197 aa).

Asp-69 serves as the catalytic Proton acceptor.

This sequence belongs to the Maf family. YceF subfamily. A divalent metal cation is required as a cofactor.

It localises to the cytoplasm. The catalysed reaction is N(7)-methyl-GTP + H2O = N(7)-methyl-GMP + diphosphate + H(+). Nucleoside triphosphate pyrophosphatase that hydrolyzes 7-methyl-GTP (m(7)GTP). May have a dual role in cell division arrest and in preventing the incorporation of modified nucleotides into cellular nucleic acids. This is 7-methyl-GTP pyrophosphatase from Syntrophotalea carbinolica (strain DSM 2380 / NBRC 103641 / GraBd1) (Pelobacter carbinolicus).